Consider the following 413-residue polypeptide: Multifunctional CCA protein (413 aa).

ATP-binding residues include Gly-8 and Arg-11. Residues Gly-8 and Arg-11 each contribute to the CTP site. Residues Asp-21 and Asp-23 each contribute to the Mg(2+) site. Residues Arg-91, Arg-137, and Arg-140 each coordinate ATP. CTP is bound by residues Arg-91, Arg-137, and Arg-140. The 102-residue stretch at 228-329 (TGIHTLMVLE…VKLFDKADLW (102 aa)) folds into the HD domain.

It belongs to the tRNA nucleotidyltransferase/poly(A) polymerase family. Bacterial CCA-adding enzyme type 1 subfamily. Monomer. Can also form homodimers and oligomers. The cofactor is Mg(2+). Ni(2+) is required as a cofactor.

It carries out the reaction a tRNA precursor + 2 CTP + ATP = a tRNA with a 3' CCA end + 3 diphosphate. It catalyses the reaction a tRNA with a 3' CCA end + 2 CTP + ATP = a tRNA with a 3' CCACCA end + 3 diphosphate. Functionally, catalyzes the addition and repair of the essential 3'-terminal CCA sequence in tRNAs without using a nucleic acid template. Adds these three nucleotides in the order of C, C, and A to the tRNA nucleotide-73, using CTP and ATP as substrates and producing inorganic pyrophosphate. tRNA 3'-terminal CCA addition is required both for tRNA processing and repair. Also involved in tRNA surveillance by mediating tandem CCA addition to generate a CCACCA at the 3' terminus of unstable tRNAs. While stable tRNAs receive only 3'-terminal CCA, unstable tRNAs are marked with CCACCA and rapidly degraded. This Shewanella loihica (strain ATCC BAA-1088 / PV-4) protein is Multifunctional CCA protein.